Reading from the N-terminus, the 389-residue chain is Phosphopentomutase (389 aa).

Mn(2+) contacts are provided by Asp10, Asp282, His287, Asp323, His324, and His335.

Belongs to the phosphopentomutase family. The cofactor is Mn(2+).

It localises to the cytoplasm. The enzyme catalyses 2-deoxy-alpha-D-ribose 1-phosphate = 2-deoxy-D-ribose 5-phosphate. It carries out the reaction alpha-D-ribose 1-phosphate = D-ribose 5-phosphate. It participates in carbohydrate degradation; 2-deoxy-D-ribose 1-phosphate degradation; D-glyceraldehyde 3-phosphate and acetaldehyde from 2-deoxy-alpha-D-ribose 1-phosphate: step 1/2. Functionally, isomerase that catalyzes the conversion of deoxy-ribose 1-phosphate (dRib-1-P) and ribose 1-phosphate (Rib-1-P) to deoxy-ribose 5-phosphate (dRib-5-P) and ribose 5-phosphate (Rib-5-P), respectively. The chain is Phosphopentomutase from Clostridium kluyveri (strain NBRC 12016).